The primary structure comprises 295 residues: Glutamyl-Q tRNA(Asp) synthetase (295 aa).

Residues 5–9 (RFAPS) and Glu-41 contribute to the L-glutamate site. Residues 8–18 (PSPTGLLHIGS) carry the 'HIGH' region motif. Cys-97, Cys-99, Tyr-117, and Cys-121 together coordinate Zn(2+). L-glutamate is bound by residues Tyr-178 and Arg-196. The 'KMSKS' region motif lies at 234 to 238 (KWSKQ). Position 237 (Lys-237) interacts with ATP.

Belongs to the class-I aminoacyl-tRNA synthetase family. GluQ subfamily. Zn(2+) serves as cofactor.

Functionally, catalyzes the tRNA-independent activation of glutamate in presence of ATP and the subsequent transfer of glutamate onto a tRNA(Asp). Glutamate is transferred on the 2-amino-5-(4,5-dihydroxy-2-cyclopenten-1-yl) moiety of the queuosine in the wobble position of the QUC anticodon. This is Glutamyl-Q tRNA(Asp) synthetase from Neisseria meningitidis serogroup C / serotype 2a (strain ATCC 700532 / DSM 15464 / FAM18).